The primary structure comprises 91 residues: MKTVTMRVTGLVQGVGFRWTTQMIAQELGITGTVKNNPDGSVSIVAQGDELPLEHFIKKIKASPSVAAHVDHVDLKIIPNTEKFTRFSVVY.

Positions 3 to 91 (TVTMRVTGLV…EKFTRFSVVY (89 aa)) constitute an Acylphosphatase-like domain. Catalysis depends on residues Arg-18 and Asn-36.

Belongs to the acylphosphatase family.

It catalyses the reaction an acyl phosphate + H2O = a carboxylate + phosphate + H(+). This Lactobacillus johnsonii (strain CNCM I-12250 / La1 / NCC 533) protein is Acylphosphatase (acyP).